The sequence spans 159 residues: Lipoprotein signal peptidase (159 aa).

Transmembrane regions (helical) follow at residues 59–79 (PMIL…YVVF) and 87–107 (FLIT…DRIL). Residues aspartate 113 and aspartate 139 contribute to the active site. A helical transmembrane segment spans residues 131-151 (LWPVFNIADSAITIGACVLVI).

Belongs to the peptidase A8 family.

Its subcellular location is the cell inner membrane. The enzyme catalyses Release of signal peptides from bacterial membrane prolipoproteins. Hydrolyzes -Xaa-Yaa-Zaa-|-(S,diacylglyceryl)Cys-, in which Xaa is hydrophobic (preferably Leu), and Yaa (Ala or Ser) and Zaa (Gly or Ala) have small, neutral side chains.. It functions in the pathway protein modification; lipoprotein biosynthesis (signal peptide cleavage). This protein specifically catalyzes the removal of signal peptides from prolipoproteins. The protein is Lipoprotein signal peptidase of Chlorobium phaeobacteroides (strain BS1).